Here is a 503-residue protein sequence, read N- to C-terminus: Lysine--tRNA ligase (503 aa).

The 'HIGH' region signature appears at 23–31 (PSGPIHVGN). A 'KMSKS' region motif is present at residues 267 to 271 (AMHSS).

The protein belongs to the class-I aminoacyl-tRNA synthetase family.

It localises to the cytoplasm. It carries out the reaction tRNA(Lys) + L-lysine + ATP = L-lysyl-tRNA(Lys) + AMP + diphosphate. The polypeptide is Lysine--tRNA ligase (Thermoplasma volcanium (strain ATCC 51530 / DSM 4299 / JCM 9571 / NBRC 15438 / GSS1)).